Here is a 331-residue protein sequence, read N- to C-terminus: Protein RecA (331 aa).

66–73 (GPESSGKT) serves as a coordination point for ATP.

It belongs to the RecA family.

It localises to the cytoplasm. In terms of biological role, can catalyze the hydrolysis of ATP in the presence of single-stranded DNA, the ATP-dependent uptake of single-stranded DNA by duplex DNA, and the ATP-dependent hybridization of homologous single-stranded DNAs. It interacts with LexA causing its activation and leading to its autocatalytic cleavage. This chain is Protein RecA, found in Acholeplasma laidlawii (strain PG-8A).